Here is a 247-residue protein sequence, read N- to C-terminus: Ribonuclease 3 (247 aa).

An RNase III domain is found at valine 21–glycine 149. Glutamate 62 serves as a coordination point for Mg(2+). Aspartate 66 is a catalytic residue. Residues aspartate 135 and glutamate 138 each coordinate Mg(2+). Glutamate 138 is a catalytic residue. Residues aspartate 176–glutamate 244 form the DRBM domain.

This sequence belongs to the ribonuclease III family. Homodimer. Mg(2+) is required as a cofactor.

It localises to the cytoplasm. It catalyses the reaction Endonucleolytic cleavage to 5'-phosphomonoester.. Digests double-stranded RNA. Involved in the processing of primary rRNA transcript to yield the immediate precursors to the large and small rRNAs (23S and 16S). Processes some mRNAs, and tRNAs when they are encoded in the rRNA operon. Processes pre-crRNA and tracrRNA of type II CRISPR loci if present in the organism. The sequence is that of Ribonuclease 3 from Corynebacterium glutamicum (strain ATCC 13032 / DSM 20300 / JCM 1318 / BCRC 11384 / CCUG 27702 / LMG 3730 / NBRC 12168 / NCIMB 10025 / NRRL B-2784 / 534).